A 222-amino-acid polypeptide reads, in one-letter code: Adenylate kinase (222 aa).

A propeptide (removed in mature form) is located at residue Ser2. Residues Ser2 and Ser3 each carry the N-acetylserine modification. Residue 16 to 21 coordinates ATP; that stretch reads GAGKGT. An NMP region spans residues 36–65; that stretch reads ATGDMLRSQIAKGTQLGLEAKKIMDQGGLV. AMP contacts are provided by residues Thr37, Arg42, 63-65, 92-95, and Gln99; these read GLV and GFPR. Residues 133–170 are LID; it reads GRLIHPASGRSYHKIFNPPKEDMKDDVTGEALVQRSDD. ATP contacts are provided by residues Arg134 and 143 to 144; that span reads SY. AMP contacts are provided by Arg167 and Arg178. Gln206 lines the ATP pocket.

The protein belongs to the adenylate kinase family. AK2 subfamily. Monomer.

The protein resides in the cytoplasm. It is found in the cytosol. Its subcellular location is the mitochondrion intermembrane space. The catalysed reaction is AMP + ATP = 2 ADP. In terms of biological role, catalyzes the reversible transfer of the terminal phosphate group between ATP and AMP. Plays an important role in cellular energy homeostasis and in adenine nucleotide metabolism. Adenylate kinase activity is critical for regulation of the phosphate utilization and the AMP de novo biosynthesis pathways. The polypeptide is Adenylate kinase (Saccharomyces cerevisiae (strain YJM789) (Baker's yeast)).